We begin with the raw amino-acid sequence, 308 residues long: Ribosomal RNA small subunit methyltransferase H (308 aa).

S-adenosyl-L-methionine is bound by residues Gly-36–His-38, Asp-55, Phe-86, Asp-103, and Gln-110.

It belongs to the methyltransferase superfamily. RsmH family.

Its subcellular location is the cytoplasm. It catalyses the reaction cytidine(1402) in 16S rRNA + S-adenosyl-L-methionine = N(4)-methylcytidine(1402) in 16S rRNA + S-adenosyl-L-homocysteine + H(+). Functionally, specifically methylates the N4 position of cytidine in position 1402 (C1402) of 16S rRNA. This chain is Ribosomal RNA small subunit methyltransferase H, found in Helicobacter pylori (strain HPAG1).